The sequence spans 503 residues: Arabinose import ATP-binding protein AraG 1 (503 aa).

2 ABC transporter domains span residues 5–240 (LRFD…MVGR) and 251–497 (RTLG…LPQT). An ATP-binding site is contributed by 37–44 (GENGAGKS).

Belongs to the ABC transporter superfamily. Arabinose importer (TC 3.A.1.2.2) family. As to quaternary structure, the complex is composed of two ATP-binding proteins (AraG), two transmembrane proteins (AraH) and a solute-binding protein (AraF).

The protein resides in the cell inner membrane. It carries out the reaction L-arabinose(out) + ATP + H2O = L-arabinose(in) + ADP + phosphate + H(+). In terms of biological role, part of the ABC transporter complex AraFGH involved in arabinose import. Responsible for energy coupling to the transport system. The protein is Arabinose import ATP-binding protein AraG 1 of Burkholderia cenocepacia (strain HI2424).